We begin with the raw amino-acid sequence, 463 residues long: Serine/threonine-protein kinase tricornered (463 aa).

A Protein kinase domain is found at 93–394; sequence FEALKVIGRG…LEDLKSVPFF (302 aa). ATP-binding positions include 99–107 and K122; that span reads IGRGAFGEV. The interval 119–180 is interaction with mats and Mob1; that stretch reads YAMKVLRKAD…EFLPGGDMMT (62 aa). The active-site Proton acceptor is the D216. S292 bears the Phosphoserine mark. Positions 395–463 constitute an AGC-kinase C-terminal domain; it reads RGVDWEHIRE…YKRFEVRNLE (69 aa). Phosphothreonine is present on T453.

It belongs to the protein kinase superfamily. AGC Ser/Thr protein kinase family. In terms of assembly, interacts with, and is activated by, Mob1. Requires Mg(2+) as cofactor. In terms of tissue distribution, expressed in the peripheral and central nervous system (at protein level). Expressed in the wing imaginal disk.

The protein resides in the cytoplasm. Its subcellular location is the nucleus. The catalysed reaction is L-seryl-[protein] + ATP = O-phospho-L-seryl-[protein] + ADP + H(+). The enzyme catalyses L-threonyl-[protein] + ATP = O-phospho-L-threonyl-[protein] + ADP + H(+). With respect to regulation, activated by fry. Functionally, serine/threonine-protein kinase involved in controlling cell structure and proliferation of a variety of polarized outgrowths including epidermal hairs, bristles, arista laterals, and dendrites. Together with fry, maintains the integrity of epidermal hairs and is an essential component of the signaling pathway regulating dendritic branching of sensory neurons. Reduces neurite outgrowth by phosphorylating pav, thereby inhibiting its function in microtubule-microtubule sliding. The polypeptide is Serine/threonine-protein kinase tricornered (Drosophila melanogaster (Fruit fly)).